Reading from the N-terminus, the 545-residue chain is Chaperonin GroEL (545 aa).

Residues 30-33 (TLGP), lysine 51, 87-91 (DGTTT), glycine 415, and aspartate 495 contribute to the ATP site.

Belongs to the chaperonin (HSP60) family. As to quaternary structure, forms a cylinder of 14 subunits composed of two heptameric rings stacked back-to-back. Interacts with the co-chaperonin GroES.

The protein localises to the cytoplasm. It carries out the reaction ATP + H2O + a folded polypeptide = ADP + phosphate + an unfolded polypeptide.. In terms of biological role, together with its co-chaperonin GroES, plays an essential role in assisting protein folding. The GroEL-GroES system forms a nano-cage that allows encapsulation of the non-native substrate proteins and provides a physical environment optimized to promote and accelerate protein folding. The chain is Chaperonin GroEL from Shewanella baltica (strain OS155 / ATCC BAA-1091).